The following is a 195-amino-acid chain: MARVPPPALKKDKKEKKPPKDNSKNVMRNLHIRKLCLNICVGESGDRLTRAAKVLEQLTGQQPVFSKARYTVRSFGIRRNEKIAVHCTVRGAKAEEILERGLKVREYELRRDNFSATGNFGFGIQEHIDLGIKYDPSIGIYGLDFYVVLGPTRIQCTTQKTQDWQGWIPPIVLTKEDAMKWFQQKYDGIILNSKK.

A disordered region spans residues 1 to 25 (MARVPPPALKKDKKEKKPPKDNSKN).

It belongs to the universal ribosomal protein uL5 family. As to quaternary structure, component of the large ribosomal subunit.

Its subcellular location is the nucleus. The protein resides in the cytoplasm. In terms of biological role, component of the ribosome, a large ribonucleoprotein complex responsible for the synthesis of proteins in the cell. The small ribosomal subunit (SSU) binds messenger RNAs (mRNAs) and translates the encoded message by selecting cognate aminoacyl-transfer RNA (tRNA) molecules. The large subunit (LSU) contains the ribosomal catalytic site termed the peptidyl transferase center (PTC), which catalyzes the formation of peptide bonds, thereby polymerizing the amino acids delivered by tRNAs into a polypeptide chain. The nascent polypeptides leave the ribosome through a tunnel in the LSU and interact with protein factors that function in enzymatic processing, targeting, and the membrane insertion of nascent chains at the exit of the ribosomal tunnel. This is Large ribosomal subunit protein uL5 (RpL11) from Spodoptera frugiperda (Fall armyworm).